The primary structure comprises 514 residues: Bifunctional purine biosynthesis protein PurH (514 aa).

One can recognise an MGS-like domain in the interval 1 to 146; it reads MARLALLSVS…KNFAHLAVLC (146 aa).

The protein belongs to the PurH family.

It catalyses the reaction (6R)-10-formyltetrahydrofolate + 5-amino-1-(5-phospho-beta-D-ribosyl)imidazole-4-carboxamide = 5-formamido-1-(5-phospho-D-ribosyl)imidazole-4-carboxamide + (6S)-5,6,7,8-tetrahydrofolate. It carries out the reaction IMP + H2O = 5-formamido-1-(5-phospho-D-ribosyl)imidazole-4-carboxamide. It participates in purine metabolism; IMP biosynthesis via de novo pathway; 5-formamido-1-(5-phospho-D-ribosyl)imidazole-4-carboxamide from 5-amino-1-(5-phospho-D-ribosyl)imidazole-4-carboxamide (10-formyl THF route): step 1/1. Its pathway is purine metabolism; IMP biosynthesis via de novo pathway; IMP from 5-formamido-1-(5-phospho-D-ribosyl)imidazole-4-carboxamide: step 1/1. The chain is Bifunctional purine biosynthesis protein PurH from Nostoc punctiforme (strain ATCC 29133 / PCC 73102).